A 258-amino-acid chain; its full sequence is Polysialic acid transport protein KpsM (258 aa).

Residues 30–251 enclose the ABC transmembrane type-2 domain; the sequence is LGYLWAILEP…FIGLALYRTR (222 aa). A run of 6 helical transmembrane segments spans residues 33–53, 61–81, 110–130, 144–164, 175–195, and 227–247; these read LWAI…FGYI, ISFP…SSIS, ALLE…IVWM, VLTW…FMVV, LPIL…LHSI, and GVSL…GLAL.

Belongs to the ABC-2 integral membrane protein family.

It localises to the cell inner membrane. In terms of biological role, kpsM and KpsT constitute a system for the transport of polysialic acid across the cytoplasmic membrane. In Escherichia coli, this protein is Polysialic acid transport protein KpsM (kpsM).